Consider the following 465-residue polypeptide: MERYGGAGEDESRSDPSHEWSAQGTETGIEASMWRLGLRGGGGGGETFPERPDEPDCIYYLRTGVCGYGSRCRFNHPRNRAPVLGGLRTEAGEFPERMGQPVCQHFMRTGTCKFGASCKYHHPRQGGGGDSVTPVSLNYMGFPLRPGEKECSYFMRTGQCKFGSTCRYHHPVPPGVQAPSQQQQQQLSAGPTMYPSLQSQTVPSSQQYGVVLARPQLLPGSYVQSPYGYGQMVLPPGMVPYSGWNPYQASVSAMPSPGTQPSMGTSSVYGITPLSPSAPAYQSGPSSTGVSNKEQTFPQRPEQPECQYFMRTGDCKFGTSCRFHHPMEAASPEASTLSHIGLPLRPGAVPCTHFAQHGICKFGPACKFDHSLGSSSLSYSPSPSSLTDMPVAPYPSSLGTLAPSSSSDQCTELISSSSIEPITTTTGGSETVAAGVSSMTSDVSHPEPAETNKGDSASNEAKTSS.

Residues 1–26 (MERYGGAGEDESRSDPSHEWSAQGTE) are disordered. 3 consecutive C3H1-type zinc fingers follow at residues 51-79 (RPDEPDCIYYLRTGVCGYGSRCRFNHPRN), 97-125 (RMGQPVCQHFMRTGTCKFGASCKYHHPRQ), and 145-173 (RPGEKECSYFMRTGQCKFGSTCRYHHPVP). Disordered regions lie at residues 173–200 (PPGVQAPSQQQQQQLSAGPTMYPSLQSQ) and 274–302 (LSPSAPAYQSGPSSTGVSNKEQTFPQRPE). Low complexity predominate over residues 177-191 (QAPSQQQQQQLSAGP). Over residues 283–298 (SGPSSTGVSNKEQTFP) the composition is skewed to polar residues. 2 C3H1-type zinc fingers span residues 300 to 328 (RPEQPECQYFMRTGDCKFGTSCRFHHPME) and 345 to 373 (RPGAVPCTHFAQHGICKFGPACKFDHSLG). Residues 397–431 (SLGTLAPSSSSDQCTELISSSSIEPITTTTGGSET) show a composition bias toward low complexity. A disordered region spans residues 397-465 (SLGTLAPSSS…SASNEAKTSS (69 aa)). The span at 444–453 (SHPEPAETNK) shows a compositional bias: basic and acidic residues. Over residues 454–465 (GDSASNEAKTSS) the composition is skewed to polar residues.

It localises to the nucleus. The protein is Zinc finger CCCH domain-containing protein 58 of Arabidopsis thaliana (Mouse-ear cress).